The following is a 231-amino-acid chain: Large ribosomal subunit protein uL1 (231 aa).

Belongs to the universal ribosomal protein uL1 family. In terms of assembly, part of the 50S ribosomal subunit.

Functionally, binds directly to 23S rRNA. The L1 stalk is quite mobile in the ribosome, and is involved in E site tRNA release. In terms of biological role, protein L1 is also a translational repressor protein, it controls the translation of the L11 operon by binding to its mRNA. This chain is Large ribosomal subunit protein uL1, found in Beijerinckia indica subsp. indica (strain ATCC 9039 / DSM 1715 / NCIMB 8712).